We begin with the raw amino-acid sequence, 542 residues long: TOM1-like protein 7 (542 aa).

The VHS domain occupies 29–158 (ATSELLRTPD…ELKRCGVKFP (130 aa)). Position 161 is a phosphoserine (Ser161). A GAT domain is found at 201–289 (EIESLSLSSL…VLARHDAIAS (89 aa)). The tract at residues 303-340 (RETSSSLKTCGAAALESADSESSSSSSSSESETDEVED) is disordered. The span at 314–332 (AAALESADSESSSSSSSSE) shows a compositional bias: low complexity. The residue at position 521 (Ser521) is a Phosphoserine. The segment at 522-542 (FPARATGTSGAATAATVDRQP) is disordered. Positions 524-542 (ARATGTSGAATAATVDRQP) are enriched in low complexity.

It belongs to the TOM1 family. In terms of tissue distribution, preferentially expressed in flowers.

It is found in the membrane. Might contribute to the loading of the ESCRT machinery. The protein is TOM1-like protein 7 of Arabidopsis thaliana (Mouse-ear cress).